We begin with the raw amino-acid sequence, 676 residues long: DNA ligase (676 aa).

NAD(+) contacts are provided by residues 34 to 38, 83 to 84, and Glu-117; these read DQEFD and SL. Lys-119 serves as the catalytic N6-AMP-lysine intermediate. Residues Arg-140, Glu-177, Lys-285, and Lys-309 each coordinate NAD(+). Residues Cys-403, Cys-406, Cys-427, and Cys-434 each contribute to the Zn(2+) site. The BRCT domain occupies 595–676; it reads NNNGLLKNKT…EWLKMLNKSG (82 aa).

It belongs to the NAD-dependent DNA ligase family. LigA subfamily. Requires Mg(2+) as cofactor. Mn(2+) serves as cofactor.

It carries out the reaction NAD(+) + (deoxyribonucleotide)n-3'-hydroxyl + 5'-phospho-(deoxyribonucleotide)m = (deoxyribonucleotide)n+m + AMP + beta-nicotinamide D-nucleotide.. DNA ligase that catalyzes the formation of phosphodiester linkages between 5'-phosphoryl and 3'-hydroxyl groups in double-stranded DNA using NAD as a coenzyme and as the energy source for the reaction. It is essential for DNA replication and repair of damaged DNA. The sequence is that of DNA ligase from Pelagibacter ubique (strain HTCC1062).